Consider the following 397-residue polypeptide: MSLVVFPFKHEHPEVLLHNVRVAAAHPRVHEVLCIGYERDQTYEAVERAAPEISRATGTPVSVRLQERLGTLRPGKGDGMNTALRYFLEETQWERIHFYDADITSFGPDWITKAEEAADFGYGLVRHYFPRASTDAMITWMITRTGFALLWPHTELSWIEQPLGGELLMRREVAAMLYEDERVRRRSDWGIDTLYTFVTVQQGVSIYECYIPEGKAHRLYGGLDDLRTMLVECFAAIQSLQHEVVGQPAIHRQEHPHRVPVHIAERVGYDVEATLHRLMQHWTPRQVELLELFTTPVREGLRTCQRRPAFNFMDEMAWAATYHVLLEHFQPGDPDWEELLFKLWTTRVLNYTMTVALRGYDYAQQYLYRMLGRYRYQAALENGRGHPVPPRAALSTA.

GDP-alpha-D-mannose contacts are provided by residues 7–11 (PFKHE), isoleucine 35, glutamine 66, lysine 76, aspartate 100, and 100–101 (DA). Aspartate 102 is a binding site for a divalent metal cation. (R)-glycerate-binding positions include arginine 131 and 136 to 139 (AMIT). Leucine 163 and aspartate 192 together coordinate GDP-alpha-D-mannose. Histidine 217 lines the a divalent metal cation pocket. GDP-alpha-D-mannose-binding residues include arginine 218 and tyrosine 220.

Belongs to the glycosyltransferase 78 family. As to quaternary structure, homotetramer. Dimer of dimers. Mg(2+) serves as cofactor. It depends on Ca(2+) as a cofactor. Mn(2+) is required as a cofactor. Requires Ni(2+) as cofactor. The cofactor is Co(2+).

The enzyme catalyses (R)-glycerate + GDP-alpha-D-mannose = (2R)-2-O-(alpha-D-mannosyl)-glycerate + GDP + H(+). With respect to regulation, inhibited by GDP. Its function is as follows. Involved in the biosynthesis of the stress protectant 2-O-alpha-D-mannosyl glycerate (MG) which is produced in response to growth at supraoptimal temperature and salinity, and protects several enzymes against inactivation by temperature, freeze-drying and osmotic stress. Catalyzes the condensation of alpha-GDP-D-mannose (GDP-Man) with D-glycerate to produce alpha-mannosyl-D-glycerate. It is specific for GDP-Man, but it can also use alpha-GDP-D-glucose (GDP-Glc), beta-GDP-D-fructose, alpha-UDP-D-mannose and alpha-UDP-D-glucose as sugar donors. It is specific for D-glycerate, but it can also use D-lactate and glycolate as sugar acceptors. This reaction occurs with a net retention of anomeric configuration; the newly formed glycosidic linkage has the same alpha configuration as the sugar donor. This chain is Mannosylglycerate synthase (mgs), found in Rhodothermus marinus (Rhodothermus obamensis).